A 206-amino-acid polypeptide reads, in one-letter code: N-(5'-phosphoribosyl)anthranilate isomerase (206 aa).

Belongs to the TrpF family.

It catalyses the reaction N-(5-phospho-beta-D-ribosyl)anthranilate = 1-(2-carboxyphenylamino)-1-deoxy-D-ribulose 5-phosphate. The protein operates within amino-acid biosynthesis; L-tryptophan biosynthesis; L-tryptophan from chorismate: step 3/5. In Citrifermentans bemidjiense (strain ATCC BAA-1014 / DSM 16622 / JCM 12645 / Bem) (Geobacter bemidjiensis), this protein is N-(5'-phosphoribosyl)anthranilate isomerase.